We begin with the raw amino-acid sequence, 475 residues long: Ribulose bisphosphate carboxylase large chain (475 aa).

The propeptide occupies 1–2; the sequence is MS. An N-acetylproline modification is found at Pro3. An N6,N6,N6-trimethyllysine modification is found at Lys14. Substrate-binding residues include Asn123 and Thr173. Lys175 serves as the catalytic Proton acceptor. Lys177 contacts substrate. Positions 201, 203, and 204 each coordinate Mg(2+). Residue Lys201 is modified to N6-carboxylysine. Residue His294 is the Proton acceptor of the active site. The substrate site is built by Arg295, His327, and Ser379.

This sequence belongs to the RuBisCO large chain family. Type I subfamily. As to quaternary structure, heterohexadecamer of 8 large chains and 8 small chains; disulfide-linked. The disulfide link is formed within the large subunit homodimers. Requires Mg(2+) as cofactor. The disulfide bond which can form in the large chain dimeric partners within the hexadecamer appears to be associated with oxidative stress and protein turnover.

The protein resides in the plastid. It localises to the chloroplast. The enzyme catalyses 2 (2R)-3-phosphoglycerate + 2 H(+) = D-ribulose 1,5-bisphosphate + CO2 + H2O. The catalysed reaction is D-ribulose 1,5-bisphosphate + O2 = 2-phosphoglycolate + (2R)-3-phosphoglycerate + 2 H(+). RuBisCO catalyzes two reactions: the carboxylation of D-ribulose 1,5-bisphosphate, the primary event in carbon dioxide fixation, as well as the oxidative fragmentation of the pentose substrate in the photorespiration process. Both reactions occur simultaneously and in competition at the same active site. The polypeptide is Ribulose bisphosphate carboxylase large chain (Amaranthus tricolor (Joseph's coat)).